The following is a 1178-amino-acid chain: Thrombospondin-2 (1178 aa).

Positions 1-22 are cleaved as a signal peptide; the sequence is MLQRSRLLWLAVFITLWVSSDA. One can recognise a Laminin G-like domain in the interval 25-221; the sequence is DAKEEENTFD…LQNIHLIFDT (197 aa). 4 N-linked (GlcNAc...) asparagine glycosylation sites follow: asparagine 157, asparagine 244, asparagine 317, and asparagine 322. Residues 324–381 enclose the VWFC domain; it reads SVCWQDGRVFADSESWIVDSCTKCTCQDSKIVCHQITCPPVSCADPSFIEGECCPVCS. TSP type-1 domains lie at 387 to 437, 443 to 498, and 500 to 555; these read EEGW…KKCD, DGGW…APCP, and NGQW…RDCP. 27 disulfide bridges follow: cysteine 399/cysteine 431, cysteine 403/cysteine 436, cysteine 414/cysteine 421, cysteine 455/cysteine 492, cysteine 459/cysteine 497, cysteine 470/cysteine 482, cysteine 512/cysteine 549, cysteine 516/cysteine 554, cysteine 527/cysteine 539, cysteine 559/cysteine 570, cysteine 564/cysteine 580, cysteine 583/cysteine 594, cysteine 600/cysteine 616, cysteine 607/cysteine 625, cysteine 628/cysteine 652, cysteine 658/cysteine 671, cysteine 665/cysteine 684, cysteine 686/cysteine 697, cysteine 713/cysteine 721, cysteine 726/cysteine 746, cysteine 762/cysteine 782, cysteine 785/cysteine 805, cysteine 821/cysteine 841, cysteine 844/cysteine 864, cysteine 882/cysteine 902, cysteine 918/cysteine 938, and cysteine 954/cysteine 1175. The N-linked (GlcNAc...) asparagine glycan is linked to asparagine 463. Residues 555–595 form the EGF-like 1 domain; it reads PIDGCLSNPCFPGAECNSYPDGSWSCGPCPAGFLGNGTVCE. N-linked (GlcNAc...) asparagine glycosylation is present at asparagine 590. Residues 654-698 enclose the EGF-like 2 domain; it reads PENPCKDKTHSCHKSAECIYLGHFSDPMYKCECRTGYAGDGRICG. TSP type-3 repeat units follow at residues 699–734, 735–770, 771–793, 794–829, 830–852, 853–890, 891–926, and 927–962; these read EDSD…NSGQ, EDFD…NPRQ, FDYD…NPAQ, IDTD…NTDQ, SDTD…NPDQ, TDAD…NANQ, ADHD…NPEQ, and EDSD…AISE. Asparagine 716 carries an N-linked (GlcNAc...) asparagine glycan. Residues 737-760 are disordered; the sequence is FDKDGKGDACDEDDDNDGVEDDKD. Residues 746–759 are compositionally biased toward acidic residues; that stretch reads CDEDDDNDGVEDDK. A disordered region spans residues 852–941; sequence QTDADNDLVG…DGRGDICKDD (90 aa). The span at 853–872 shows a compositional bias: acidic residues; that stretch reads TDADNDLVGDQCDNNEDIDE. Over residues 891–901 the composition is skewed to basic and acidic residues; the sequence is ADHDKDGKGDA. Residues 902–911 show a composition bias toward acidic residues; that stretch reads CDPDDDNDGI. Basic and acidic residues-rich tracts occupy residues 912–924 and 931–940; these read PDDR…RYNP and GDGRGDICKD. The Cell attachment site signature appears at 934–936; that stretch reads RGD. The TSP C-terminal domain occupies 966 to 1178; the sequence is RKFQMVPLDP…SDLKYECRDA (213 aa). N-linked (GlcNAc...) asparagine glycosylation occurs at asparagine 1075.

It belongs to the thrombospondin family. Homotrimer; disulfide-linked. Can bind to fibrinogen, fibronectin, laminin and type V collagen.

Adhesive glycoprotein that mediates cell-to-cell and cell-to-matrix interactions. The chain is Thrombospondin-2 (THBS2) from Gallus gallus (Chicken).